A 491-amino-acid polypeptide reads, in one-letter code: NADH-quinone oxidoreductase subunit N (491 aa).

14 consecutive transmembrane segments (helical) span residues 11 to 31 (ATAE…TTFA), 38 to 58 (LAYG…YNTA), 74 to 94 (LLGD…LLYG), 106 to 126 (PEYY…VTSN), 128 to 148 (LLSM…LVAF), 163 to 183 (FVLG…LYGA), 206 to 226 (LLFG…VVPF), 243 to 263 (LIIA…LLVW), 272 to 292 (WQTM…LAAI), 301 to 321 (LAYS…SGVV), 336 to 356 (MFYA…IILL), 379 to 399 (FAAM…FIGF), 410 to 430 (VAAG…IGAF), and 465 to 485 (LAIA…TFVL).

Belongs to the complex I subunit 2 family. In terms of assembly, NDH-1 is composed of 14 different subunits. Subunits NuoA, H, J, K, L, M, N constitute the membrane sector of the complex.

It localises to the cell inner membrane. It catalyses the reaction a quinone + NADH + 5 H(+)(in) = a quinol + NAD(+) + 4 H(+)(out). In terms of biological role, NDH-1 shuttles electrons from NADH, via FMN and iron-sulfur (Fe-S) centers, to quinones in the respiratory chain. The immediate electron acceptor for the enzyme in this species is believed to be ubiquinone. Couples the redox reaction to proton translocation (for every two electrons transferred, four hydrogen ions are translocated across the cytoplasmic membrane), and thus conserves the redox energy in a proton gradient. This chain is NADH-quinone oxidoreductase subunit N, found in Azoarcus sp. (strain BH72).